A 362-amino-acid chain; its full sequence is Molybdopterin synthase catalytic subunit (362 aa).

Substrate contacts are provided by residues 101-102 (HR), Lys117, and 124-126 (KKE).

It belongs to the MoaE family. MOCS2B subfamily. Heterotetramer; composed of 2 small (Mocs2A) and 2 large (Mocs2B) subunits.

It localises to the cytoplasm. It carries out the reaction 2 [molybdopterin-synthase sulfur-carrier protein]-C-terminal-Gly-aminoethanethioate + cyclic pyranopterin phosphate + H2O = molybdopterin + 2 [molybdopterin-synthase sulfur-carrier protein]-C-terminal Gly-Gly + 2 H(+). The protein operates within cofactor biosynthesis; molybdopterin biosynthesis. Catalytic subunit of the molybdopterin synthase complex, a complex that catalyzes the conversion of precursor Z into molybdopterin. Acts by mediating the incorporation of 2 sulfur atoms from thiocarboxylated Mocs2A into precursor Z to generate a dithiolene group. The protein is Molybdopterin synthase catalytic subunit of Drosophila grimshawi (Hawaiian fruit fly).